The primary structure comprises 231 residues: Large ribosomal subunit protein uL1 (231 aa).

It belongs to the universal ribosomal protein uL1 family. Part of the 50S ribosomal subunit.

In terms of biological role, binds directly to 23S rRNA. The L1 stalk is quite mobile in the ribosome, and is involved in E site tRNA release. Functionally, protein L1 is also a translational repressor protein, it controls the translation of the L11 operon by binding to its mRNA. The polypeptide is Large ribosomal subunit protein uL1 (Lactobacillus delbrueckii subsp. bulgaricus (strain ATCC 11842 / DSM 20081 / BCRC 10696 / JCM 1002 / NBRC 13953 / NCIMB 11778 / NCTC 12712 / WDCM 00102 / Lb 14)).